The following is a 224-amino-acid chain: Protein GrpE (224 aa).

The segment at 1 to 72 (MEKERDVAQE…KAKEEQNEEL (72 aa)) is disordered. Residues 10–19 (EQATYEQESP) are compositionally biased toward polar residues. Residues 20-67 (NAERQEELKENEHQEKNAPEEQEKVREENGRQDAQKDEIGDPEKAKEE) show a composition bias toward basic and acidic residues.

The protein belongs to the GrpE family. As to quaternary structure, homodimer.

The protein localises to the cytoplasm. Its function is as follows. Participates actively in the response to hyperosmotic and heat shock by preventing the aggregation of stress-denatured proteins, in association with DnaK and GrpE. It is the nucleotide exchange factor for DnaK and may function as a thermosensor. Unfolded proteins bind initially to DnaJ; upon interaction with the DnaJ-bound protein, DnaK hydrolyzes its bound ATP, resulting in the formation of a stable complex. GrpE releases ADP from DnaK; ATP binding to DnaK triggers the release of the substrate protein, thus completing the reaction cycle. Several rounds of ATP-dependent interactions between DnaJ, DnaK and GrpE are required for fully efficient folding. The polypeptide is Protein GrpE (Parageobacillus thermoglucosidasius (Geobacillus thermoglucosidasius)).